The following is a 389-amino-acid chain: NADH-dependent butanol dehydrogenase A (389 aa).

Belongs to the iron-containing alcohol dehydrogenase family. In terms of assembly, homodimer.

It functions in the pathway alcohol metabolism; butanol biosynthesis. This is NADH-dependent butanol dehydrogenase A (bdhA) from Clostridium acetobutylicum (strain ATCC 824 / DSM 792 / JCM 1419 / IAM 19013 / LMG 5710 / NBRC 13948 / NRRL B-527 / VKM B-1787 / 2291 / W).